The primary structure comprises 229 residues: Artemin (229 aa).

At Ala-1 the chain carries N-acetylalanine. The Ferritin-like diiron domain occupies 25–173; sequence HNFDPECEKA…DCLSNLHCIG (149 aa).

Belongs to the ferritin family.

This is Artemin from Artemia salina (Brine shrimp).